Here is a 124-residue protein sequence, read N- to C-terminus: Holo-[acyl-carrier-protein] synthase (124 aa).

Residues Asp7 and Glu55 each contribute to the Mg(2+) site.

This sequence belongs to the P-Pant transferase superfamily. AcpS family. Requires Mg(2+) as cofactor.

Its subcellular location is the cytoplasm. The catalysed reaction is apo-[ACP] + CoA = holo-[ACP] + adenosine 3',5'-bisphosphate + H(+). Functionally, transfers the 4'-phosphopantetheine moiety from coenzyme A to a Ser of acyl-carrier-protein. This is Holo-[acyl-carrier-protein] synthase from Borrelia garinii subsp. bavariensis (strain ATCC BAA-2496 / DSM 23469 / PBi) (Borreliella bavariensis).